A 404-amino-acid polypeptide reads, in one-letter code: Methionine aminopeptidase 1D, mitochondrial (404 aa).

The N-terminal 58 residues, 1–58, are a transit peptide targeting the mitochondrion; that stretch reads MNKILKNIINKSSINNVFKTSFNGGISSSSSSSSSYLNNNNNIIKSYNVQQKQQQRYY. The segment at 86–109 is disordered; the sequence is VRSQRLTKKTASPLEGMNRKERRK. His232 lines the substrate pocket. 3 residues coordinate a divalent metal cation: Asp249, Asp260, and His323. Residue His330 participates in substrate binding. A divalent metal cation is bound by residues Glu355 and Glu389.

This sequence belongs to the peptidase M24A family. Methionine aminopeptidase type 1 subfamily. Co(2+) is required as a cofactor. Zn(2+) serves as cofactor. It depends on Mn(2+) as a cofactor. The cofactor is Fe(2+).

The protein resides in the mitochondrion. It catalyses the reaction Release of N-terminal amino acids, preferentially methionine, from peptides and arylamides.. Removes the N-terminal methionine from nascent proteins. The N-terminal methionine is often cleaved when the second residue in the primary sequence is small and uncharged (Met-Ala-, Cys, Gly, Pro, Ser, Thr, or Val). The protein is Methionine aminopeptidase 1D, mitochondrial (metap1d) of Dictyostelium discoideum (Social amoeba).